We begin with the raw amino-acid sequence, 590 residues long: Muscarinic acetylcholine receptor M3 (590 aa).

The Extracellular portion of the chain corresponds to 1–67 (MTLHNNNTTS…DPLGGHTIWQ (67 aa)). N6, N7, N15, N41, N48, and N53 each carry an N-linked (GlcNAc...) asparagine glycan. Residues 68–91 (VVFIAFLTGVLALVTIIGNILVIV) traverse the membrane as a helical segment. The Cytoplasmic portion of the chain corresponds to 92–104 (AFKVNKQLKTVNN). Residues 105–125 (YFLLSLACADLIIGVISMNLF) form a helical membrane-spanning segment. Residues 126–142 (TTYIIMNRWALGNLACD) lie on the Extracellular side of the membrane. C141 and C221 are oxidised to a cystine. A helical membrane pass occupies residues 143 to 164 (LWLSIDYVASNASVMNLLVISF). Residues 165 to 184 (DRYFSITRPLTYRAKRTTKR) are Cytoplasmic-facing. Residues 185–207 (AGVMIGLAWVISFILWAPAILFW) traverse the membrane as a helical segment. Topologically, residues 208-229 (QYFVGKRTVPPGECFIQFLSEP) are extracellular. Residues 230–252 (TITFGTAIAAFYMPVTIMTILYW) traverse the membrane as a helical segment. The Cytoplasmic segment spans residues 253 to 492 (RIYKETEKRT…LIKEKKAAQT (240 aa)). Residues 275–281 (AEAENFV) carry the Basolateral sorting signal motif. Residues 324-357 (AEQMDQDHSSSDSWNNNDAAASLENSASSDEEDI) are disordered. Over residues 334 to 345 (SDSWNNNDAAAS) the composition is skewed to low complexity. S385 bears the Phosphoserine mark. Residues 398–419 (SVGLERKPSKLQTQQSMDDGGS) form a disordered region. Residues 407-419 (KLQTQQSMDDGGS) show a composition bias toward polar residues. A helical membrane pass occupies residues 493–513 (LSAILLAFIITWTPYNIMVLV). Topologically, residues 514–527 (NTFCDSCIPKTYWN) are extracellular. The helical transmembrane segment at 528-547 (LGYWLCYINSTVNPVCYALC) threads the bilayer. Residues 548 to 590 (NKTFRNTFKMLLLCQCDKRKRRKQQYQQRQSVIFHKRVPEQAL) lie on the Cytoplasmic side of the membrane.

The protein belongs to the G-protein coupled receptor 1 family. Muscarinic acetylcholine receptor subfamily. CHRM3 sub-subfamily. As to quaternary structure, homodimer; the dimers can form tetramers. Interacts with NALCN. Interacts with TMEM147.

Its subcellular location is the cell membrane. The protein localises to the postsynaptic cell membrane. It localises to the basolateral cell membrane. It is found in the endoplasmic reticulum membrane. The muscarinic acetylcholine receptor mediates various cellular responses, including inhibition of adenylate cyclase, breakdown of phosphoinositides and modulation of potassium channels through the action of G proteins. Primary transducing effect is Pi turnover. This is Muscarinic acetylcholine receptor M3 (CHRM3) from Bos taurus (Bovine).